The chain runs to 341 residues: Zinc finger protein ZIC 4 (341 aa).

The disordered stretch occupies residues 36–66; it reads HHGPQLAASSNPSVLPGLHEQPPQASHSRPL. A C2H2-type 1; atypical zinc finger spans residues 135–169; that stretch reads LICKWLGDDSPMSPRPCSKTFSTMHELVTHVTVEH. The C2H2-type 2; atypical zinc finger occupies 178-205; that stretch reads HICFWEECPRQGKPFKAKYKLVNHIRVH. 3 C2H2-type zinc fingers span residues 211 to 235, 241 to 265, and 271 to 295; these read FPCP…KRTH, FRCE…SHVH, and YMCK…MKVH. The tract at residues 289-309 is disordered; that stretch reads RKHMKVHGRSPPPSSGYDSAI.

The protein belongs to the GLI C2H2-type zinc-finger protein family. Exclusively expressed in the cerebellum.

The protein resides in the nucleus. Its function is as follows. Binds to DNA. The chain is Zinc finger protein ZIC 4 (Zic4) from Mus musculus (Mouse).